Consider the following 1051-residue polypeptide: Kinesin-like protein KIN-UC (1051 aa).

Low complexity-rich tracts occupy residues 1–12, 28–39, and 64–90; these read MSSSNSSSAVRS, NSNHAVSLSSSS, and SASS…PVRR. Disordered regions lie at residues 1–39 and 51–109; these read MSSS…SSSS and PGIA…RVSV. Positions 104 to 441 constitute a Kinesin motor domain; that stretch reads RVRVSVRVRP…IMFGQRAMKI (338 aa). Residue 189–196 participates in ATP binding; sequence GQTGTGKT. The short motif at 411-419 is the D-BOX element; sequence RTSLIITIG. Coiled coils occupy residues 452–534 and 568–761; these read DYES…QKDQ and DTSQ…KRYM. Positions 753-766 are enriched in basic and acidic residues; the sequence is NVVEEKRYMKEDLS. The segment at 753-788 is disordered; sequence NVVEEKRYMKEDLSKGSAESGAQTGSQRSQGLKKSL. A compositionally biased stretch (polar residues) spans 772–788; sequence SGAQTGSQRSQGLKKSL. ARM repeat units lie at residues 792 to 831, 833 to 873, and 875 to 915; these read RATM…NLAA, EANQ…NLAM, and EKSQ…NLCG. The stretch at 917–956 is one ARM 4; degenerate repeat; the sequence is EKFLKLLKEEEGIKGLLTMAQSGNIDIIAQVARGMANFAK.

It belongs to the TRAFAC class myosin-kinesin ATPase superfamily. Kinesin family. Ungrouped subfamily. As to quaternary structure, interacts (via C-terminus) with NEK5. Expressed in young root hair-forming cells and in root hair-producing cells at the boundary between the hypocotyl and root. Expressed in cotyledons, young leaves, trichomes and flowers.

The protein resides in the cytoplasm. The protein localises to the cytoskeleton. It is found in the spindle. Its subcellular location is the phragmoplast. Acts as a plus-end microtubule-dependent motor protein. Involved in the control of root hair tip growth by promoting microtubule depolymerization and limiting the accumulation of endoplasmic microtubules. In vitro, binds to polymerized actin through ARM repeats, and to polymerized tubulin through N-terminal motor domain. In Arabidopsis thaliana (Mouse-ear cress), this protein is Kinesin-like protein KIN-UC.